The following is a 203-amino-acid chain: A-type ATP synthase subunit E (203 aa).

This sequence belongs to the V-ATPase E subunit family. Has multiple subunits with at least A(3), B(3), C, D, E, F, H, I and proteolipid K(x).

The protein localises to the cell membrane. Its function is as follows. Component of the A-type ATP synthase that produces ATP from ADP in the presence of a proton gradient across the membrane. This is A-type ATP synthase subunit E from Desulfurococcus sp. (strain SY).